A 415-amino-acid polypeptide reads, in one-letter code: Serine hydroxymethyltransferase (415 aa).

(6S)-5,6,7,8-tetrahydrofolate contacts are provided by residues Leu-119 and 123–125; that span reads GHL. The residue at position 228 (Lys-228) is an N6-(pyridoxal phosphate)lysine.

It belongs to the SHMT family. In terms of assembly, homodimer. Pyridoxal 5'-phosphate serves as cofactor.

It localises to the cytoplasm. The catalysed reaction is (6R)-5,10-methylene-5,6,7,8-tetrahydrofolate + glycine + H2O = (6S)-5,6,7,8-tetrahydrofolate + L-serine. The protein operates within one-carbon metabolism; tetrahydrofolate interconversion. Its pathway is amino-acid biosynthesis; glycine biosynthesis; glycine from L-serine: step 1/1. In terms of biological role, catalyzes the reversible interconversion of serine and glycine with tetrahydrofolate (THF) serving as the one-carbon carrier. This reaction serves as the major source of one-carbon groups required for the biosynthesis of purines, thymidylate, methionine, and other important biomolecules. Also exhibits THF-independent aldolase activity toward beta-hydroxyamino acids, producing glycine and aldehydes, via a retro-aldol mechanism. The chain is Serine hydroxymethyltransferase from Coprothermobacter proteolyticus (strain ATCC 35245 / DSM 5265 / OCM 4 / BT).